A 422-amino-acid chain; its full sequence is Zinc-regulated transporter 2 (422 aa).

Residues 1 to 27 lie on the Extracellular side of the membrane; the sequence is MVDLIARDDSVDTCQASNGYNGHAGLR. Residues 28-48 traverse the membrane as a helical segment; it reads ILAVFIILISSGLGVYFPILS. Over 49-60 the chain is Cytoplasmic; sequence SRYSFIRLPNWC. Residues 61 to 81 form a helical membrane-spanning segment; that stretch reads FFIAKFFGSGVIVATAFVHLL. Over 82 to 99 the chain is Extracellular; sequence QPAAEALGDECLGGTFAE. A helical transmembrane segment spans residues 100–120; that stretch reads YPWAFGICLMSLFLLFFTEII. Over 121–262 the chain is Cytoplasmic; the sequence is THYFVAKTLG…EEDKEQYLNQ (142 aa). Residues Ser-148, Ser-149, Ser-162, and Ser-170 each carry the phosphoserine modification. At Thr-188 the chain carries Phosphothreonine. The chain crosses the membrane as a helical span at residues 263–283; sequence ILAVFILEFGIIFHSVFVGLS. Residues 284-290 are Extracellular-facing; the sequence is LSVAGEE. The chain crosses the membrane as a helical span at residues 291-311; it reads FETLFIVLTFHQMFEGLGLGT. At 312–326 the chain is on the cytoplasmic side; that stretch reads RVAETNWPESKKYMP. The helical transmembrane segment at 327–347 threads the bilayer; it reads WLMGLAFTLTSPIAVAVGIGV. The Extracellular segment spans residues 348 to 358; it reads RHSWIPGSRRA. A helical transmembrane segment spans residues 359–379; it reads LIANGVFDSISSGILIYTGLV. Over 380–400 the chain is Cytoplasmic; that stretch reads ELMAHEFLYSNQFKGPDGLKK. The chain crosses the membrane as a helical span at residues 401 to 421; sequence MLSAYLIMCCGAALMALLGKW. Ala-422 is a topological domain (extracellular).

Belongs to the ZIP transporter (TC 2.A.5) family.

The protein resides in the membrane. In terms of biological role, low-affinity zinc transport protein. Active in zinc-replete cells and is time-, temperature- and concentration-dependent and prefers zinc over other metals as its substrate. The polypeptide is Zinc-regulated transporter 2 (ZRT2) (Saccharomyces cerevisiae (strain ATCC 204508 / S288c) (Baker's yeast)).